The following is a 222-amino-acid chain: Putative serine proteinase inhibitor 2 homolog second part (222 aa).

This sequence belongs to the serpin family. Poxviruses subfamily.

This Homo sapiens (Human) protein is Putative serine proteinase inhibitor 2 homolog second part.